The following is a 1117-amino-acid chain: Protein ECM21 (1117 aa).

Disordered regions lie at residues 1–48 and 63–155; these read MPFI…RRSS and VHSP…YSQI. Positions 11–34 are enriched in polar residues; it reads KNSSHSLSETDLNQSKGQPFQPSP. At Ser-18 the chain carries Phosphoserine. Residues 70–81 show a composition bias toward low complexity; it reads NNTTKGGNNNGN. A Phosphoserine modification is found at Ser-115. Over residues 117-130 the composition is skewed to low complexity; sequence SDSATTTPRSSTSD. Ser-140 carries the phosphoserine modification. Residue Lys-191 forms a Glycyl lysine isopeptide (Lys-Gly) (interchain with G-Cter in ubiquitin) linkage. Disordered stretches follow at residues 275–312 and 486–523; these read ATTAAATESGGSINENRDTLLRENNSGDHPGSGSELNT and YRQDSNSPQPIVSPDSSSSLSSTTSSLKLTETESAQAH. Ser-286 carries the post-translational modification Phosphoserine. Residues 501–519 are compositionally biased toward low complexity; it reads SSSSLSSTTSSLKLTETES. A phosphoserine mark is found at Ser-527 and Ser-550. Glycyl lysine isopeptide (Lys-Gly) (interchain with G-Cter in ubiquitin) cross-links involve residues Lys-577, Lys-651, and Lys-712. The residue at position 775 (Ser-775) is a Phosphoserine. Residues Lys-794, Lys-807, and Lys-1024 each participate in a glycyl lysine isopeptide (Lys-Gly) (interchain with G-Cter in ubiquitin) cross-link. Disordered stretches follow at residues 1016–1065 and 1079–1117; these read RSRF…KDKQ and KDDEEQEGIVSSSSADSLLSHGNEPPRYDEIVPLMSDEE. Residues 1027–1059 are compositionally biased toward polar residues; that stretch reads STPSPVNRSHNSSPTNGLSQANGTVRIPNATTE. Residue Ser-1035 is modified to Phosphoserine. Residues 1089–1098 are compositionally biased toward low complexity; sequence SSSSADSLLS.

Belongs to the CSR2 family.

It localises to the cytoplasm. Its function is as follows. May be involved in cell wall organization and biogenesis. The sequence is that of Protein ECM21 (ECM21) from Saccharomyces cerevisiae (strain ATCC 204508 / S288c) (Baker's yeast).